Here is a 309-residue protein sequence, read N- to C-terminus: Ribose-phosphate pyrophosphokinase (309 aa).

ATP is bound by residues 37 to 39 (DGE) and 96 to 97 (RQ). Positions 130 and 169 each coordinate Mg(2+). Lys192 is a catalytic residue. D-ribose 5-phosphate is bound by residues Arg194, Asp218, and 222–226 (DTAGT).

Belongs to the ribose-phosphate pyrophosphokinase family. Class I subfamily. Homohexamer. Mg(2+) serves as cofactor.

It localises to the cytoplasm. The catalysed reaction is D-ribose 5-phosphate + ATP = 5-phospho-alpha-D-ribose 1-diphosphate + AMP + H(+). The protein operates within metabolic intermediate biosynthesis; 5-phospho-alpha-D-ribose 1-diphosphate biosynthesis; 5-phospho-alpha-D-ribose 1-diphosphate from D-ribose 5-phosphate (route I): step 1/1. In terms of biological role, involved in the biosynthesis of the central metabolite phospho-alpha-D-ribosyl-1-pyrophosphate (PRPP) via the transfer of pyrophosphoryl group from ATP to 1-hydroxyl of ribose-5-phosphate (Rib-5-P). The protein is Ribose-phosphate pyrophosphokinase of Wolinella succinogenes (strain ATCC 29543 / DSM 1740 / CCUG 13145 / JCM 31913 / LMG 7466 / NCTC 11488 / FDC 602W) (Vibrio succinogenes).